We begin with the raw amino-acid sequence, 178 residues long: Caveolin-1 (178 aa).

The residue at position 2 (serine 2) is an N-acetylserine. Serine 2 is modified (phosphoserine). Residues 2–94 (SGGKYIDSEG…WKASFTTFTV (93 aa)) form a required for homooligomerization region. The Cytoplasmic portion of the chain corresponds to 2 to 104 (SGGKYIDSEG…TKYWFYRLLS (103 aa)). Position 5 is an N6-acetyllysine; alternate (lysine 5). Lysine 5 is covalently cross-linked (Glycyl lysine isopeptide (Lys-Gly) (interchain with G-Cter in ubiquitin); alternate). Tyrosine 6 is subject to Phosphotyrosine. The residue at position 9 (serine 9) is a Phosphoserine. The residue at position 14 (tyrosine 14) is a Phosphotyrosine; by ABL1. Phosphotyrosine is present on tyrosine 25. Glycyl lysine isopeptide (Lys-Gly) (interchain with G-Cter in ubiquitin) cross-links involve residues lysine 26, lysine 30, lysine 39, lysine 47, and lysine 57. The tract at residues 82 to 94 (DGIWKASFTTFTV) is interaction with CAVIN3. Positions 105 to 125 (ALFGIPMALIWGIYFAILSFL) form an intramembrane region, helical. Over 126–178 (HIWAVVPCIRSYLIEIQCISRIYSICIHTFCDPLFEAIGKIFSNVRIALQKEI) the chain is Cytoplasmic. Positions 131–142 (VPCIRSYLIEIQ) are interacts with SPRY1, SPRY2, SPRY3 and SPRY4. S-palmitoyl cysteine attachment occurs at residues cysteine 133, cysteine 143, and cysteine 156. The segment at 149–160 (SICIHTFCDPLF) is interacts with SPRY1, SPRY2, and SPRY4. Residues 167–178 (FSNVRIALQKEI) form an interacts with SPRY1, SPRY2, SPRY3 and SPRY4 region.

Belongs to the caveolin family. As to quaternary structure, homooligomer. Interacts with GLIPR2. Interacts with NOSTRIN. Interacts with SNAP25 and STX1A. Interacts (via the N-terminus) with DPP4; the interaction is direct. Interacts with CTNNB1, CDH1 and JUP. Interacts with PACSIN2; this interaction induces membrane tubulation. Interacts with SLC7A9. Interacts with BMX and BTK. Interacts with TGFBR1. Interacts with CAVIN3 (via leucine-zipper domain) in a cholesterol-sensitive manner. Interacts with CAVIN1. Interacts with EHD2 in a cholesterol-dependent manner. Forms a ternary complex with UBXN6 and VCP; mediates CAV1 targeting to lysosomes for degradation. Interacts with ABCG1; this interaction regulates ABCG1-mediated cholesterol efflux. Interacts with NEU3; this interaction enhances NEU3 sialidase activity within caveola. Interacts (via C-terminus) with SPRY1, SPRY2 (via C-terminus), SPRY3, and SPRY4. Interacts with IGFBP5; this interaction allows trafficking of IGFBP5 from the plasma membrane to the nucleus. Phosphorylated at Tyr-14 by ABL1 in response to oxidative stress. Post-translationally, ubiquitinated. Undergo monoubiquitination and multi- and/or polyubiquitination. Monoubiquitination of N-terminal lysines promotes integration in a ternary complex with UBXN6 and VCP which promotes oligomeric CAV1 targeting to lysosomes for degradation. Ubiquitinated by ZNRF1; leading to degradation and modulation of the TLR4-mediated immune response.

It localises to the golgi apparatus membrane. Its subcellular location is the cell membrane. It is found in the membrane. The protein localises to the caveola. The protein resides in the membrane raft. May act as a scaffolding protein within caveolar membranes. Forms a stable heterooligomeric complex with CAV2 that targets to lipid rafts and drives caveolae formation. Mediates the recruitment of CAVIN proteins (CAVIN1/2/3/4) to the caveolae. Interacts directly with G-protein alpha subunits and can functionally regulate their activity. Involved in the costimulatory signal essential for T-cell receptor (TCR)-mediated T-cell activation. Its binding to DPP4 induces T-cell proliferation and NF-kappa-B activation in a T-cell receptor/CD3-dependent manner. Recruits CTNNB1 to caveolar membranes and may regulate CTNNB1-mediated signaling through the Wnt pathway. Negatively regulates TGFB1-mediated activation of SMAD2/3 by mediating the internalization of TGFBR1 from membrane rafts leading to its subsequent degradation. Binds 20(S)-hydroxycholesterol (20(S)-OHC). The polypeptide is Caveolin-1 (CAV1) (Didelphis virginiana (North American opossum)).